We begin with the raw amino-acid sequence, 477 residues long: Exodeoxyribonuclease 7 large subunit (477 aa).

Residues 456–477 (GGTVAPRKAPPKKPGGGQGSLL) are disordered.

The protein belongs to the XseA family. Heterooligomer composed of large and small subunits.

Its subcellular location is the cytoplasm. It carries out the reaction Exonucleolytic cleavage in either 5'- to 3'- or 3'- to 5'-direction to yield nucleoside 5'-phosphates.. In terms of biological role, bidirectionally degrades single-stranded DNA into large acid-insoluble oligonucleotides, which are then degraded further into small acid-soluble oligonucleotides. The protein is Exodeoxyribonuclease 7 large subunit of Parvibaculum lavamentivorans (strain DS-1 / DSM 13023 / NCIMB 13966).